A 255-amino-acid chain; its full sequence is 1-(5-phosphoribosyl)-5-[(5-phosphoribosylamino)methylideneamino] imidazole-4-carboxamide isomerase (255 aa).

The Proton acceptor role is filled by Asp12. The active-site Proton donor is Asp131.

The protein belongs to the HisA/HisF family.

It localises to the cytoplasm. The catalysed reaction is 1-(5-phospho-beta-D-ribosyl)-5-[(5-phospho-beta-D-ribosylamino)methylideneamino]imidazole-4-carboxamide = 5-[(5-phospho-1-deoxy-D-ribulos-1-ylimino)methylamino]-1-(5-phospho-beta-D-ribosyl)imidazole-4-carboxamide. The protein operates within amino-acid biosynthesis; L-histidine biosynthesis; L-histidine from 5-phospho-alpha-D-ribose 1-diphosphate: step 4/9. In Cutibacterium acnes (strain DSM 16379 / KPA171202) (Propionibacterium acnes), this protein is 1-(5-phosphoribosyl)-5-[(5-phosphoribosylamino)methylideneamino] imidazole-4-carboxamide isomerase.